Reading from the N-terminus, the 154-residue chain is Spore-associated protein A (154 aa).

An N-terminal signal peptide occupies residues 1–33; sequence MQAVGATLTAVGAIGAGLLVTAPAAGAATAGAT.

It is found in the spore wall. This chain is Spore-associated protein A, found in Streptomyces coelicolor (strain ATCC BAA-471 / A3(2) / M145).